A 443-amino-acid chain; its full sequence is Probable lipase C16A3.12c (443 aa).

Residues 1–16 (MSGFNKNQIYWGDYVG) are Cytoplasmic-facing. A helical; Signal-anchor for type II membrane protein membrane pass occupies residues 17–37 (VIAAFVGVYTELVARIFIYMI). The Lumenal segment spans residues 38 to 443 (PERVREWFRV…KHFVKQNGFH (406 aa)). The region spanning 116 to 410 (VVYCHHGLMT…HYEHLDFLWG (295 aa)) is the AB hydrolase-1 domain. N-linked (GlcNAc...) asparagine glycans are attached at residues Asn-134 and Asn-177. The Nucleophile role is filled by Ser-210. N-linked (GlcNAc...) asparagine glycosylation is found at Asn-304 and Asn-335. Active-site charge relay system residues include Asp-378 and His-404.

The protein belongs to the AB hydrolase superfamily. Lipase family.

It is found in the cytoplasm. Its subcellular location is the vacuole. The protein resides in the membrane. Functionally, probable lipase. The protein is Probable lipase C16A3.12c of Schizosaccharomyces pombe (strain 972 / ATCC 24843) (Fission yeast).